Reading from the N-terminus, the 425-residue chain is Serine--tRNA ligase (425 aa).

229–231 (TSE) contributes to the L-serine binding site. Residues 259–261 (RKE) and Val275 contribute to the ATP site. Glu282 contributes to the L-serine binding site. 349–352 (EVTS) serves as a coordination point for ATP. Thr384 is an L-serine binding site.

It belongs to the class-II aminoacyl-tRNA synthetase family. Type-1 seryl-tRNA synthetase subfamily. In terms of assembly, homodimer. The tRNA molecule binds across the dimer.

The protein resides in the cytoplasm. The catalysed reaction is tRNA(Ser) + L-serine + ATP = L-seryl-tRNA(Ser) + AMP + diphosphate + H(+). It catalyses the reaction tRNA(Sec) + L-serine + ATP = L-seryl-tRNA(Sec) + AMP + diphosphate + H(+). The protein operates within aminoacyl-tRNA biosynthesis; selenocysteinyl-tRNA(Sec) biosynthesis; L-seryl-tRNA(Sec) from L-serine and tRNA(Sec): step 1/1. Catalyzes the attachment of serine to tRNA(Ser). Is also able to aminoacylate tRNA(Sec) with serine, to form the misacylated tRNA L-seryl-tRNA(Sec), which will be further converted into selenocysteinyl-tRNA(Sec). This chain is Serine--tRNA ligase, found in Borreliella burgdorferi (strain ATCC 35210 / DSM 4680 / CIP 102532 / B31) (Borrelia burgdorferi).